The chain runs to 308 residues: MALIQHGSVSGTSAVRLSFSSSVSPPSSSPPLSRVSLNFQSEKKSCYRRMICRAMVQDSVQGIPSVYAREMERLSAKESLILAFNDAGGFEALVTGKITDMQKIDVNERITNLERLNPTPRPTTSPYLEGRWSFEWFGVNTPGSLAVRVMFERFPSTLVSLSNMEIFIKDNNTKATANIKLLNSIENKITLSSKLTIEGPLRMKEEYLEGLLESPTVIEEAVPDQLRGLLGQATTTLQQLPEPIKDTLANGLRIPLGGTYQRFFMISYLDDEILIVRDTAGVPEVLTRVETSSPMSSSSVVENLEYNS.

Residues 1-55 (MALIQHGSVSGTSAVRLSFSSSVSPPSSSPPLSRVSLNFQSEKKSCYRRMICRAM) constitute a chloroplast transit peptide.

The protein belongs to the PAP/fibrillin family.

It is found in the plastid. The protein localises to the chloroplast. It localises to the plastoglobule. The chain is Probable plastid-lipid-associated protein 9, chloroplastic (PAP9) from Arabidopsis thaliana (Mouse-ear cress).